A 634-amino-acid chain; its full sequence is Alpha-L-iduronidase (634 aa).

The first 16 residues, 1-16 (MLTFFAAFLAAPLALA), serve as a signal peptide directing secretion. Proline 44, leucine 46, and histidine 48 together coordinate alpha-D-mannopyranose. Histidine 81 contacts alpha-L-iduronate. Asparagine 100 carries an N-linked (GlcNAc...) asparagine glycan. Alpha-L-iduronate contacts are provided by asparagine 171 and glutamate 172. The active-site Proton donor is the glutamate 172. Asparagine 180 and asparagine 233 each carry an N-linked (GlcNAc...) asparagine glycan. Alpha-L-iduronate is bound by residues lysine 254, glutamate 289, and glycine 295. The active-site Nucleophile is glutamate 289. Tryptophan 296 contacts alpha-D-mannopyranose. An N-linked (GlcNAc...) asparagine glycan is attached at asparagine 326. Residues aspartate 339 and arginine 353 each contribute to the alpha-L-iduronate site. 3 N-linked (GlcNAc...) asparagine glycosylation sites follow: asparagine 362, asparagine 405, and asparagine 441. A disulfide bridge links cysteine 531 with cysteine 567.

The protein belongs to the glycosyl hydrolase 39 family. As to quaternary structure, monomer. Post-translationally, N-glycosylation contributes to substrate binding and is required for full enzymatic activity. As to expression, ubiquitous.

Its subcellular location is the lysosome. The catalysed reaction is Hydrolysis of unsulfated alpha-L-iduronosidic linkages in dermatan sulfate.. The sequence is that of Alpha-L-iduronidase (Idua) from Mus musculus (Mouse).